A 347-amino-acid chain; its full sequence is UDP-3-O-acylglucosamine N-acyltransferase 1 (347 aa).

H246 acts as the Proton acceptor in catalysis.

The protein belongs to the transferase hexapeptide repeat family. LpxD subfamily. In terms of assembly, homotrimer.

The catalysed reaction is a UDP-3-O-[(3R)-3-hydroxyacyl]-alpha-D-glucosamine + a (3R)-hydroxyacyl-[ACP] = a UDP-2-N,3-O-bis[(3R)-3-hydroxyacyl]-alpha-D-glucosamine + holo-[ACP] + H(+). It participates in bacterial outer membrane biogenesis; LPS lipid A biosynthesis. In terms of biological role, catalyzes the N-acylation of UDP-3-O-acylglucosamine using 3-hydroxyacyl-ACP as the acyl donor. Is involved in the biosynthesis of lipid A, a phosphorylated glycolipid that anchors the lipopolysaccharide to the outer membrane of the cell. The protein is UDP-3-O-acylglucosamine N-acyltransferase 1 of Francisella tularensis subsp. holarctica (strain LVS).